Here is an 805-residue protein sequence, read N- to C-terminus: Angiotensin-converting enzyme 2 (805 aa).

A signal peptide spans 1-17 (MSGSSWLLLSLVAVTAA). At 18 to 740 (QSTIEEQAKT…LGPPNQPPVS (723 aa)) the chain is on the extracellular side. A Peptidase M2 domain is found at 19-607 (STIEEQAKTF…QNKNSFVGWS (589 aa)). N-linked (GlcNAc...) asparagine glycans are attached at residues Asn-53, Asn-90, and Asn-103. A disulfide bridge connects residues Cys-133 and Cys-141. Residue Arg-169 coordinates chloride. Arg-273 contacts substrate. N-linked (GlcNAc...) asparagine glycosylation is present at Asn-322. A disulfide bridge connects residues Cys-344 and Cys-361. Residue 345 to 346 (HP) coordinates substrate. A Zn(2+)-binding site is contributed by His-374. Glu-375 functions as the Proton acceptor in the catalytic mechanism. Residues His-378 and Glu-402 each coordinate Zn(2+). The N-linked (GlcNAc...) asparagine glycan is linked to Asn-432. The chloride site is built by Trp-477 and Lys-481. His-505 acts as the Proton donor in catalysis. Tyr-515 is a binding site for substrate. A disulfide bridge links Cys-530 with Cys-542. N-linked (GlcNAc...) asparagine glycosylation is present at Asn-546. In terms of domain architecture, Collectrin-like spans 614 to 805 (ADQSIKVRIS…QNTDDVQTSF (192 aa)). The interval 652 to 659 (RKYFLEVK) is essential for cleavage by ADAM17. An N-linked (GlcNAc...) asparagine glycan is attached at Asn-690. Positions 697–716 (RTEVEKAIRMSRSRINDAFR) are essential for cleavage by TMPRSS11D and TMPRSS2. The helical transmembrane segment at 741–761 (IWLIVFGVVMGVIVVGIVVLI) threads the bilayer. Topologically, residues 762-805 (FTGIRDRKKKNKARNEENPYASIDISKGENNPGFQNTDDVQTSF) are cytoplasmic. A disordered region spans residues 772 to 805 (NKARNEENPYASIDISKGENNPGFQNTDDVQTSF). An LIR motif is present at residues 778-786 (ENPYASIDI). The residue at position 781 (Tyr-781) is a Phosphotyrosine. Residues 781–784 (YASI) carry the Endocytic sorting signal motif. The SH2-binding motif lies at 781–785 (YASID). The residue at position 783 (Ser-783) is a Phosphoserine. Residue Lys-788 forms a Glycyl lysine isopeptide (Lys-Gly) (interchain with G-Cter in ubiquitin) linkage. Polar residues predominate over residues 789–805 (GENNPGFQNTDDVQTSF). The PTB signature appears at 792–795 (NPGF). Residues 803-805 (TSF) carry the PDZ-binding motif.

It belongs to the peptidase M2 family. As to quaternary structure, homodimer. Interacts with the catalytically active form of TMPRSS2. Interacts with SLC6A19; this interaction is essential for expression and function of SLC6A19 in intestine. Interacts with ITGA5:ITGB1. Probably interacts (via endocytic sorting signal motif) with AP2M1; the interaction is inhibited by phosphorylation of Tyr-781. Interacts (via PDZ-binding motif) with NHERF1 (via PDZ domains); the interaction may enhance ACE2 membrane residence. Zn(2+) is required as a cofactor. Chloride serves as cofactor. Proteolytic cleavage by ADAM17 generates a secreted form. Also cleaved by serine proteases: TMPRSS2, TMPRSS11D and HPN/TMPRSS1. In terms of processing, phosphorylated. Phosphorylation at Tyr-781 probably inhibits interaction with AP2M1 and enables interactions with proteins containing SH2 domains. Post-translationally, ubiquitinated. Ubiquitinated on Lys-788 via 'Lys-48'-linked ubiquitin. 'Lys-48'-linked deubiquitinated by USP50 on the Lys-788; leading to its stabilization.

The protein localises to the secreted. Its subcellular location is the cell membrane. It localises to the cytoplasm. The protein resides in the cell projection. It is found in the cilium. The protein localises to the apical cell membrane. The enzyme catalyses angiotensin II + H2O = angiotensin-(1-7) + L-phenylalanine. The catalysed reaction is angiotensin I + H2O = angiotensin-(1-9) + L-leucine. It catalyses the reaction bradykinin(1-8) + H2O = bradykinin(1-7) + L-phenylalanine. It carries out the reaction neurotensin + H2O = neurotensin-(1-12) + L-leucine. The enzyme catalyses kinetensin + H2O = kinetensin-(1-8) + L-leucine. The catalysed reaction is dynorphin A-(1-13) + H2O = dynorphin A-(1-12) + L-lysine. It catalyses the reaction apelin-13 + H2O = apelin-12 + L-phenylalanine. It carries out the reaction [Pyr1]apelin-13 + H2O = [Pyr1]apelin-12 + L-phenylalanine. The enzyme catalyses apelin-17 + H2O = apelin-16 + L-phenylalanine. Essential counter-regulatory carboxypeptidase of the renin-angiotensin hormone system that is a critical regulator of blood volume, systemic vascular resistance, and thus cardiovascular homeostasis. Converts angiotensin I to angiotensin 1-9, a nine-amino acid peptide with anti-hypertrophic effects in cardiomyocytes, and angiotensin II to angiotensin 1-7, which then acts as a beneficial vasodilator and anti-proliferation agent, counterbalancing the actions of the vasoconstrictor angiotensin II. Also removes the C-terminal residue from three other vasoactive peptides, neurotensin, kinetensin, and des-Arg bradykinin, but is not active on bradykinin. Also cleaves other biological peptides, such as apelins, casomorphins and dynorphin A. Plays an important role in amino acid transport by acting as binding partner of amino acid transporter SLC6A19 in intestine, regulating trafficking, expression on the cell surface, and its catalytic activity. The chain is Angiotensin-converting enzyme 2 (ACE2) from Pongo abelii (Sumatran orangutan).